Reading from the N-terminus, the 268-residue chain is Sexual development regulator velC (268 aa).

The segment covering 1–13 (MPHGFDKLLHPEP) has biased composition (basic and acidic residues). Disordered regions lie at residues 1-124 (MPHG…DNFS) and 142-165 (DPDP…NPPH). Residues 14 to 26 (EPQSPSPPPPPRR) are compositionally biased toward pro residues. One can recognise a Velvet domain in the interval 28–257 (STQSRYHLHI…ELGFVELKTR (230 aa)). Positions 92–121 (DGNRDREREREHERERERERETDGVARTDD) are enriched in basic and acidic residues.

The protein belongs to the velvet family. VelC subfamily. Interacts with velA and vosA.

The protein localises to the nucleus. Its function is as follows. Velvet-domain-containing protein that acts as a positive regulator of sexual development. The polypeptide is Sexual development regulator velC (Penicillium rubens (strain ATCC 28089 / DSM 1075 / NRRL 1951 / Wisconsin 54-1255) (Penicillium chrysogenum)).